The following is a 155-amino-acid chain: Chaperone protein IpgC (155 aa).

The protein belongs to the LcrH/SycD chaperone family.

Its subcellular location is the cytoplasm. Functionally, assists the correct folding of nascent IpaB. Once it is bound to IpaB, it binds to IpaC and impedes their premature association that would lead to their degradation in the absence of IpcG. This Shigella dysenteriae protein is Chaperone protein IpgC (ipgC).